The sequence spans 128 residues: Con-Ins F2c (128 aa).

A signal peptide spans 1–24 (MTTSSYFLLVALGLLLYVCRSSFG). Intrachain disulfides connect cysteine 29-cysteine 104, cysteine 41-cysteine 107, cysteine 53-cysteine 120, and cysteine 106-cysteine 111. A propeptide spans 59–89 (LQGGTGKKRGRASLLRKRRAFLSMLKARAKR) (c peptide). Glutamate 115 carries the 4-carboxyglutamate; partial modification. Serine 127 carries the post-translational modification Serine amide.

It belongs to the insulin family. Heterodimer of A and B chains; disulfide-linked. As to expression, expressed by the venom gland.

The protein localises to the secreted. This venom insulin facilitates prey capture by rapidly inducing hypoglycemic shock. Intraperitoneal injection of this peptide into zebrafish lowers blood glucose with the same potency than human insulin. In vivo, when applied to water, this peptide reduces overall locomotor activity of zebrafish larvae, observed as a significant decrease in the percentage of time spent swimming and movement frequency. The sequence is that of Con-Ins F2c from Conus floridulus (Cone snail).